Reading from the N-terminus, the 132-residue chain is UPF0292 protein PYRAB04740 (132 aa).

The 81-residue stretch at 20–100 folds into the Toprim domain; that stretch reads DGAIIVEGPR…KVDTETRRSL (81 aa). Residues Glu26, Asp69, and Asp71 each coordinate Mg(2+).

This sequence belongs to the UPF0292 family. Mg(2+) is required as a cofactor.

In Pyrococcus abyssi (strain GE5 / Orsay), this protein is UPF0292 protein PYRAB04740.